A 176-amino-acid chain; its full sequence is Viral interleukin-10 homolog (176 aa).

A signal peptide spans 1-25 (MLSVMVSSSLVLIVFFLGASEEAKP). Disulfide bonds link cysteine 38/cysteine 128 and cysteine 82/cysteine 133. Asparagine 152 carries an N-linked (GlcNAc...) asparagine; by host glycan.

Belongs to the IL-10 family. In terms of assembly, homodimer; disulfide-linked.

It localises to the secreted. Functionally, functional viral IL-10 homolog. Can bind to the human IL-10 receptor and compete with human IL-10 for binding sites. Requires both subunits of the human IL-10 receptor complex to induce signal transduction events and biological activities. IL-10 signaling pathway has several immunosuppressive activities that are exploited by the virus. Inhibits TLR-induced type I interferon production in host plasmacytoid dendritic cells. This chain is Viral interleukin-10 homolog (UL111A), found in Homo sapiens (Human).